The following is a 522-amino-acid chain: MSNRVIIFDTTLRDGEQALAASLSVKEKLQIAMALERLGVDVMEVGFPVSSPGDFESVQTIARTIKNSRVCALSRALEKDIDAAAQALSVADQFRIHTFISTSTIHVESKLKRSFDQVLEMAVSAVKYARRFTDDVEFSCEDAGRTPIDNLCRMVEAAILAGARTINIPDTVGYTVPSEFGTIIQTLFNRVPNIDQAVISVHCHDDLGLSVANSITAVQHGARQIECTINGIGERAGNCSLEEIAMILATRKGMLGLETGINAKEIHRTSNLVSQLCNMPVQANKAIVGANAFTHSSGIHQDGMLKAQNTYEIMTPESIGLNRNNLNMTSRSGRHVIKHRMEEMGYSEHDYNMDALYEEFLKLADKKGQVFDYDLEALAFMEAQAEEDNHYQLQQLVVQSDSTEGVATATVRIEVGGEIKTEAATGNGPVDAAYNAIARATDRRIDIISYKLGAKGVGQNALGQVDITAVYHEQNFHGVGLATDVVEASARALVHVMNLTCRADKVADYKQSMQKNRELGGV.

One can recognise a Pyruvate carboxyltransferase domain in the interval 5-267; it reads VIIFDTTLRD…ETGINAKEIH (263 aa). Mn(2+) is bound by residues D14, H202, H204, and N238. The regulatory domain stretch occupies residues 392–522; it reads QLQQLVVQSD…MQKNRELGGV (131 aa).

Belongs to the alpha-IPM synthase/homocitrate synthase family. LeuA type 1 subfamily. In terms of assembly, homodimer. Requires Mn(2+) as cofactor.

It is found in the cytoplasm. The catalysed reaction is 3-methyl-2-oxobutanoate + acetyl-CoA + H2O = (2S)-2-isopropylmalate + CoA + H(+). It participates in amino-acid biosynthesis; L-leucine biosynthesis; L-leucine from 3-methyl-2-oxobutanoate: step 1/4. Functionally, catalyzes the condensation of the acetyl group of acetyl-CoA with 3-methyl-2-oxobutanoate (2-ketoisovalerate) to form 3-carboxy-3-hydroxy-4-methylpentanoate (2-isopropylmalate). In Shewanella baltica (strain OS155 / ATCC BAA-1091), this protein is 2-isopropylmalate synthase.